We begin with the raw amino-acid sequence, 332 residues long: Phosphate acyltransferase (332 aa).

This sequence belongs to the PlsX family. As to quaternary structure, homodimer. Probably interacts with PlsY.

The protein resides in the cytoplasm. The catalysed reaction is a fatty acyl-[ACP] + phosphate = an acyl phosphate + holo-[ACP]. The protein operates within lipid metabolism; phospholipid metabolism. Catalyzes the reversible formation of acyl-phosphate (acyl-PO(4)) from acyl-[acyl-carrier-protein] (acyl-ACP). This enzyme utilizes acyl-ACP as fatty acyl donor, but not acyl-CoA. The sequence is that of Phosphate acyltransferase from Sulfurimonas denitrificans (strain ATCC 33889 / DSM 1251) (Thiomicrospira denitrificans (strain ATCC 33889 / DSM 1251)).